Consider the following 275-residue polypeptide: Large ribosomal subunit protein uL2 (275 aa).

2 disordered regions span residues 1 to 20 (MAVKKYRPYTPSRRQMTTAD) and 214 to 275 (WLGR…TRRK). The span at 255–275 (KGLKTRRKRKTSDRFIVTRRK) shows a compositional bias: basic residues.

The protein belongs to the universal ribosomal protein uL2 family. Part of the 50S ribosomal subunit. Forms a bridge to the 30S subunit in the 70S ribosome.

One of the primary rRNA binding proteins. Required for association of the 30S and 50S subunits to form the 70S ribosome, for tRNA binding and peptide bond formation. It has been suggested to have peptidyltransferase activity; this is somewhat controversial. Makes several contacts with the 16S rRNA in the 70S ribosome. In Deinococcus radiodurans (strain ATCC 13939 / DSM 20539 / JCM 16871 / CCUG 27074 / LMG 4051 / NBRC 15346 / NCIMB 9279 / VKM B-1422 / R1), this protein is Large ribosomal subunit protein uL2 (rplB).